Reading from the N-terminus, the 803-residue chain is Exo-1,4-beta-xylosidase xlnD (803 aa).

Positions 1 to 18 (MRSLISVAVLSALPTAFS) are cleaved as a signal peptide. N-linked (GlcNAc...) asparagine glycans are attached at residues N21, N44, N85, N122, N140, and N234. Residue D307 is part of the active site. N437, N474, N515, N611, N676, and N698 each carry an N-linked (GlcNAc...) asparagine glycan.

It belongs to the glycosyl hydrolase 3 family.

The protein resides in the secreted. It carries out the reaction Hydrolysis of (1-&gt;4)-beta-D-xylans, to remove successive D-xylose residues from the non-reducing termini.. Its pathway is glycan degradation; xylan degradation. In terms of biological role, xylan 1,4-beta-xylosidase involved in the hydrolysis of xylan, a major structural heterogeneous polysaccharide found in plant biomass representing the second most abundant polysaccharide in the biosphere, after cellulose. This chain is Exo-1,4-beta-xylosidase xlnD (xlnD), found in Emericella nidulans (strain FGSC A4 / ATCC 38163 / CBS 112.46 / NRRL 194 / M139) (Aspergillus nidulans).